A 502-amino-acid polypeptide reads, in one-letter code: Aspartyl/glutamyl-tRNA(Asn/Gln) amidotransferase subunit B (502 aa).

The protein belongs to the GatB/GatE family. GatB subfamily. In terms of assembly, heterotrimer of A, B and C subunits.

The enzyme catalyses L-glutamyl-tRNA(Gln) + L-glutamine + ATP + H2O = L-glutaminyl-tRNA(Gln) + L-glutamate + ADP + phosphate + H(+). It catalyses the reaction L-aspartyl-tRNA(Asn) + L-glutamine + ATP + H2O = L-asparaginyl-tRNA(Asn) + L-glutamate + ADP + phosphate + 2 H(+). Allows the formation of correctly charged Asn-tRNA(Asn) or Gln-tRNA(Gln) through the transamidation of misacylated Asp-tRNA(Asn) or Glu-tRNA(Gln) in organisms which lack either or both of asparaginyl-tRNA or glutaminyl-tRNA synthetases. The reaction takes place in the presence of glutamine and ATP through an activated phospho-Asp-tRNA(Asn) or phospho-Glu-tRNA(Gln). This Pseudarthrobacter chlorophenolicus (strain ATCC 700700 / DSM 12829 / CIP 107037 / JCM 12360 / KCTC 9906 / NCIMB 13794 / A6) (Arthrobacter chlorophenolicus) protein is Aspartyl/glutamyl-tRNA(Asn/Gln) amidotransferase subunit B.